Here is a 156-residue protein sequence, read N- to C-terminus: ATP synthase subunit b (156 aa).

The helical transmembrane segment at 11-31 threads the bilayer; sequence AIAFVIFVWFCMKYVWPPLMA.

Belongs to the ATPase B chain family. In terms of assembly, F-type ATPases have 2 components, F(1) - the catalytic core - and F(0) - the membrane proton channel. F(1) has five subunits: alpha(3), beta(3), gamma(1), delta(1), epsilon(1). F(0) has three main subunits: a(1), b(2) and c(10-14). The alpha and beta chains form an alternating ring which encloses part of the gamma chain. F(1) is attached to F(0) by a central stalk formed by the gamma and epsilon chains, while a peripheral stalk is formed by the delta and b chains.

It localises to the cell inner membrane. Functionally, f(1)F(0) ATP synthase produces ATP from ADP in the presence of a proton or sodium gradient. F-type ATPases consist of two structural domains, F(1) containing the extramembraneous catalytic core and F(0) containing the membrane proton channel, linked together by a central stalk and a peripheral stalk. During catalysis, ATP synthesis in the catalytic domain of F(1) is coupled via a rotary mechanism of the central stalk subunits to proton translocation. In terms of biological role, component of the F(0) channel, it forms part of the peripheral stalk, linking F(1) to F(0). In Klebsiella pneumoniae (strain 342), this protein is ATP synthase subunit b.